Here is a 703-residue protein sequence, read N- to C-terminus: Arf-GAP with GTPase, ANK repeat and PH domain-containing protein 9 (703 aa).

3 disordered regions span residues 249–287 (KRNG…TPTP), 299–323 (FTSE…TIGS), and 427–449 (SSTT…KHLK). Over residues 271–286 (QEDPQFSVPPTANTPT) the composition is skewed to polar residues. The segment covering 303–318 (KGSDPDKERKAPENHA) has biased composition (basic and acidic residues). A PH domain is found at 327–488 (IPIKQGMLLK…WVQAIQSQIL (162 aa)). Positions 509-629 (AMALQSIQNM…LFLAPLPCTE (121 aa)) constitute an Arf-GAP domain. A C4-type zinc finger spans residues 524–547 (CVDCETQNPKWASLNLGVLMCIEC). The ANK repeat unit spans residues 631 to 700 (SLGQQLLRAT…WTSWPEMPTG (70 aa)).

The protein belongs to the centaurin gamma-like family.

Putative GTPase-activating protein. The chain is Arf-GAP with GTPase, ANK repeat and PH domain-containing protein 9 (AGAP9) from Homo sapiens (Human).